Consider the following 388-residue polypeptide: Succinate--CoA ligase [ADP-forming] subunit beta (388 aa).

The ATP-grasp domain maps to 9 to 244 (KQLFAEYGLP…PSQDDPREAH (236 aa)). Residues lysine 46, 53-55 (GRG), glutamate 99, threonine 102, and glutamate 107 contribute to the ATP site. Asparagine 199 and aspartate 213 together coordinate Mg(2+). Residues asparagine 264 and 321-323 (GIV) each bind substrate.

It belongs to the succinate/malate CoA ligase beta subunit family. As to quaternary structure, heterotetramer of two alpha and two beta subunits. Mg(2+) is required as a cofactor.

It carries out the reaction succinate + ATP + CoA = succinyl-CoA + ADP + phosphate. The enzyme catalyses GTP + succinate + CoA = succinyl-CoA + GDP + phosphate. It participates in carbohydrate metabolism; tricarboxylic acid cycle; succinate from succinyl-CoA (ligase route): step 1/1. Succinyl-CoA synthetase functions in the citric acid cycle (TCA), coupling the hydrolysis of succinyl-CoA to the synthesis of either ATP or GTP and thus represents the only step of substrate-level phosphorylation in the TCA. The beta subunit provides nucleotide specificity of the enzyme and binds the substrate succinate, while the binding sites for coenzyme A and phosphate are found in the alpha subunit. The sequence is that of Succinate--CoA ligase [ADP-forming] subunit beta from Pseudomonas fluorescens (strain ATCC BAA-477 / NRRL B-23932 / Pf-5).